The chain runs to 738 residues: 1,4-alpha-glucan branching enzyme GlgB (738 aa).

The active-site Nucleophile is D417. The active-site Proton donor is the E472.

The protein belongs to the glycosyl hydrolase 13 family. GlgB subfamily. As to quaternary structure, monomer.

The catalysed reaction is Transfers a segment of a (1-&gt;4)-alpha-D-glucan chain to a primary hydroxy group in a similar glucan chain.. It participates in glycan biosynthesis; glycogen biosynthesis. Its function is as follows. Catalyzes the formation of the alpha-1,6-glucosidic linkages in glycogen by scission of a 1,4-alpha-linked oligosaccharide from growing alpha-1,4-glucan chains and the subsequent attachment of the oligosaccharide to the alpha-1,6 position. The chain is 1,4-alpha-glucan branching enzyme GlgB from Burkholderia pseudomallei (strain 1106a).